The primary structure comprises 345 residues: Histidinol-phosphate aminotransferase (345 aa).

An N6-(pyridoxal phosphate)lysine modification is found at Lys205.

Belongs to the class-II pyridoxal-phosphate-dependent aminotransferase family. Histidinol-phosphate aminotransferase subfamily. As to quaternary structure, homodimer. The cofactor is pyridoxal 5'-phosphate.

The enzyme catalyses L-histidinol phosphate + 2-oxoglutarate = 3-(imidazol-4-yl)-2-oxopropyl phosphate + L-glutamate. Its pathway is amino-acid biosynthesis; L-histidine biosynthesis; L-histidine from 5-phospho-alpha-D-ribose 1-diphosphate: step 7/9. The chain is Histidinol-phosphate aminotransferase from Parabacteroides distasonis (strain ATCC 8503 / DSM 20701 / CIP 104284 / JCM 5825 / NCTC 11152).